The following is a 183-amino-acid chain: ATP synthase subunit b, chloroplastic (183 aa).

Residues 27–49 form a helical membrane-spanning segment; that stretch reads LATNPINLSVVLGVLIFFGKGVL.

This sequence belongs to the ATPase B chain family. As to quaternary structure, F-type ATPases have 2 components, F(1) - the catalytic core - and F(0) - the membrane proton channel. F(1) has five subunits: alpha(3), beta(3), gamma(1), delta(1), epsilon(1). F(0) has four main subunits: a(1), b(1), b'(1) and c(10-14). The alpha and beta chains form an alternating ring which encloses part of the gamma chain. F(1) is attached to F(0) by a central stalk formed by the gamma and epsilon chains, while a peripheral stalk is formed by the delta, b and b' chains.

It localises to the plastid. The protein resides in the chloroplast thylakoid membrane. Functionally, f(1)F(0) ATP synthase produces ATP from ADP in the presence of a proton or sodium gradient. F-type ATPases consist of two structural domains, F(1) containing the extramembraneous catalytic core and F(0) containing the membrane proton channel, linked together by a central stalk and a peripheral stalk. During catalysis, ATP synthesis in the catalytic domain of F(1) is coupled via a rotary mechanism of the central stalk subunits to proton translocation. Its function is as follows. Component of the F(0) channel, it forms part of the peripheral stalk, linking F(1) to F(0). The chain is ATP synthase subunit b, chloroplastic from Ranunculus macranthus (Large buttercup).